The following is a 436-amino-acid chain: Enolase (436 aa).

Q167 lines the (2R)-2-phosphoglycerate pocket. E209 acts as the Proton donor in catalysis. 3 residues coordinate Mg(2+): D246, E291, and D318. Residues K343, R372, S373, and K394 each coordinate (2R)-2-phosphoglycerate. K343 (proton acceptor) is an active-site residue.

This sequence belongs to the enolase family. As to quaternary structure, component of the RNA degradosome, a multiprotein complex involved in RNA processing and mRNA degradation. The cofactor is Mg(2+).

It is found in the cytoplasm. The protein resides in the secreted. It localises to the cell surface. It catalyses the reaction (2R)-2-phosphoglycerate = phosphoenolpyruvate + H2O. It participates in carbohydrate degradation; glycolysis; pyruvate from D-glyceraldehyde 3-phosphate: step 4/5. Catalyzes the reversible conversion of 2-phosphoglycerate (2-PG) into phosphoenolpyruvate (PEP). It is essential for the degradation of carbohydrates via glycolysis. This is Enolase from Actinobacillus pleuropneumoniae serotype 3 (strain JL03).